The primary structure comprises 231 residues: MAKLTKRQKAIAEKIESGKQYAFEDAAKLLAEVSAVKFTESFDIAINLGVDPRKSDQVVRGATVLPNGTGKTVRVAVFTQGPGAEAALAAGADRVGMDDLAAEMKGGDLNYDVVIASPDAMRVVGQLGQVLGPRGLMPNPKVGTVTPDVATAVKNAKAGQVRFRTDKNGIIHTSVGKVGFDAAALKQNVEALLSDLKRLKPSTSKGIYVKRVTLSTTMGPGLVIDQASLEA.

Belongs to the universal ribosomal protein uL1 family. Part of the 50S ribosomal subunit.

In terms of biological role, binds directly to 23S rRNA. The L1 stalk is quite mobile in the ribosome, and is involved in E site tRNA release. Protein L1 is also a translational repressor protein, it controls the translation of the L11 operon by binding to its mRNA. The chain is Large ribosomal subunit protein uL1 from Stutzerimonas stutzeri (strain A1501) (Pseudomonas stutzeri).